The sequence spans 154 residues: Golgi-associated plant pathogenesis-related protein 1 (154 aa).

Positions 1–21 (MGKSASKQFHNEVLKAHNEYR) are disordered. A lipid anchor (N-myristoyl glycine) is attached at glycine 2. Residues 9-21 (FHNEVLKAHNEYR) are compositionally biased toward basic and acidic residues. The SCP domain occupies 14-132 (LKAHNEYRQK…SDGSSFVVAR (119 aa)). Residues 30–53 (KLCKNLNREAQQYSEALASTRILK) adopt a coiled-coil conformation. The segment at 91–98 (NFQQPGFT) is interaction with CAV1.

The protein belongs to the CRISP family. In terms of assembly, homodimer. Interacts with CAV1. Highest expression in lung and peripheral leukocytes, and minor expression in liver and kidney.

The protein localises to the golgi apparatus membrane. This is Golgi-associated plant pathogenesis-related protein 1 (GLIPR2) from Homo sapiens (Human).